A 359-amino-acid polypeptide reads, in one-letter code: Gene 58 protein (359 aa).

11 consecutive transmembrane segments (helical) span residues 12–32, 45–65, 75–95, 103–123, 132–152, 154–174, 220–240, 246–266, 271–289, 296–318, and 330–350; these read TMAA…CFLF, VDEL…FFCF, YLDL…ICLQ, YLPI…PVTF, YANA…YLLL, FGSV…IAGL, LCVV…AGVY, VLKT…GMGY, ATFV…VFVL, SVLF…TIML, and IVLS…NVLY.

The protein belongs to the herpesviridae BMRF2 family.

The protein resides in the host membrane. The sequence is that of Gene 58 protein (58) from Equine herpesvirus 2 (strain 86/87) (EHV-2).